A 159-amino-acid polypeptide reads, in one-letter code: Cytochrome c-type biogenesis protein CcmE (159 aa).

Over 1–23 the chain is Cytoplasmic; the sequence is MNNSSLENSASLKVILKQRKKKR. The chain crosses the membrane as a helical; Signal-anchor for type II membrane protein span at residues 24–44; sequence LLIILLCCLVMAIAASLVVYA. Over 45–159 the chain is Periplasmic; the sequence is MRHAVSFFRM…RLKKHYSVEK (115 aa). Heme-binding residues include H138 and Y142.

This sequence belongs to the CcmE/CycJ family.

The protein resides in the cell inner membrane. Functionally, heme chaperone required for the biogenesis of c-type cytochromes. Transiently binds heme delivered by CcmC and transfers the heme to apo-cytochromes in a process facilitated by CcmF and CcmH. The protein is Cytochrome c-type biogenesis protein CcmE of Bartonella tribocorum (strain CIP 105476 / IBS 506).